The chain runs to 907 residues: Leucine-rich repeat-containing G-protein coupled receptor 5 (907 aa).

Positions 1-21 (MDTSRVRMLLSLLALLQLVAA) are cleaved as a signal peptide. Topologically, residues 22 to 561 (GSPPRPDTMP…EHLFGSWLIR (540 aa)) are extracellular. The LRRNT domain occupies 33–64 (GCPSYCHCELDGRMLLRVDCSDLGLSELPSNL). Cystine bridges form between C34/C40 and C38/C52. 17 LRR repeats span residues 44–64 (GRML…PSNL), 65–88 (SVFT…LLHR), 89–112 (LRFL…AFAG), 114–136 (HSLK…ALQN), 137–160 (LRSL…CFSG), 162–184 (HSLR…AFRS), 186–208 (SALQ…AFGN), 209–232 (LSSL…CFDG), 233–256 (LHSL…IKTL), 257–279 (SNLK…AFVG), 281–303 (PSLI…AFQH), 304–327 (LPEL…LTGT), 328–350 (ATLE…VCDQ), 351–375 (LPNL…GCQK), 377–396 (QKID…TFQQ), 397–420 (LFNL…AFST), and 422–444 (PSLI…GLHG). Residues N63 and N77 are each glycosylated (N-linked (GlcNAc...) asparagine). N208 carries an N-linked (GlcNAc...) asparagine glycan. C348 and C373 form a disulfide bridge. C479 and C541 are disulfide-bonded. The chain crosses the membrane as a helical span at residues 562–582 (IGVWTTAVLALSCNALVAFTV). Residues 564-585 (VWTTAVLALSCNALVAFTVFRT) form an LRR 18 repeat. Over 583 to 595 (FRTPLYISSIKLL) the chain is Cytoplasmic. The chain crosses the membrane as a helical span at residues 596 to 616 (IGVIAVVDILMGVSSAILAVV). At 617–638 (DTFTFGSFAQHGAWWEGGIGCQ) the chain is on the extracellular side. An intrachain disulfide couples C637 to C712. The chain crosses the membrane as a helical span at residues 639 to 659 (IVGFLSIFASESSVFLLTLAA). Residues 660–682 (LERGFSVKCSSKFEMKAPLSSLK) are Cytoplasmic-facing. A helical transmembrane segment spans residues 683-703 (AIILLCVLLALTIATVPLLGG). The Extracellular portion of the chain corresponds to 704–723 (SEYNASPLCLPLPFGEPSTT). A helical transmembrane segment spans residues 724–744 (GYMVALVLLNSLCFLIMTIAY). The Cytoplasmic segment spans residues 745 to 775 (TRLYCSLEKGELENLWDCSMVKHTALLLFTN). A helical transmembrane segment spans residues 776–796 (CILYCPVAFLSFSSLLNLTFI). At 797–802 (SPEVIK) the chain is on the extracellular side. The helical transmembrane segment at 803 to 823 (FILLVIVPLPACLNPLLYIVF) threads the bilayer. Topologically, residues 824 to 907 (NPHFKEDMGS…LSSVAFVPCL (84 aa)) are cytoplasmic.

The protein belongs to the G-protein coupled receptor 1 family. As to quaternary structure, identified in a complex composed of RNF43, LGR5 and RSPO1. Also interacts with other R-spondin ligands, including RSPO2, RSPO3 and RSPO4.

It localises to the cell membrane. It is found in the golgi apparatus. The protein localises to the trans-Golgi network membrane. Receptor for R-spondins that potentiates the canonical Wnt signaling pathway and acts as a stem cell marker of the intestinal epithelium and the hair follicle. Upon binding to R-spondins (RSPO1, RSPO2, RSPO3 or RSPO4), associates with phosphorylated LRP6 and frizzled receptors that are activated by extracellular Wnt receptors, triggering the canonical Wnt signaling pathway to increase expression of target genes. In contrast to classical G-protein coupled receptors, does not activate heterotrimeric G-proteins to transduce the signal. Involved in the development and/or maintenance of the adult intestinal stem cells during postembryonic development. The polypeptide is Leucine-rich repeat-containing G-protein coupled receptor 5 (Lgr5) (Rattus norvegicus (Rat)).